The chain runs to 355 residues: Na(+)/H(+) exchange regulatory cofactor NHE-RF1 (355 aa).

An N-acetylserine modification is found at Ser2. Ser2 and Ser46 each carry phosphoserine. The PDZ 1 domain maps to 14–94; sequence LCCLEKGPNG…AVRLLVVDPE (81 aa). Basic and acidic residues-rich tracts occupy residues 110 to 119 and 127 to 146; these read LLRPQEKSEQ and DTHEAGDQNEAEKSHLRELR. Residues 110–146 are disordered; sequence LLRPQEKSEQAEPPAAADTHEAGDQNEAEKSHLRELR. Residues 149–229 form the PDZ 2 domain; it reads LCTMKKGPNG…EAKLLVVDKE (81 aa). A disordered region spans residues 244 to 355; the sequence is EHLDGPLPEP…SKKNELFSNL (112 aa). Residues 259-268 show a composition bias toward basic and acidic residues; it reads IQKESSREAL. Phosphoserine is present on residues Ser264, Ser275, Ser285, and Ser286. Low complexity predominate over residues 270–286; the sequence is EPASESPRPALARSASS. Thr288 bears the Phosphothreonine mark. Phosphoserine occurs at positions 289, 294, and 297. Residues 303–323 show a composition bias toward low complexity; the sequence is STEPSSTSSSSSDPILDLNIS. The segment covering 345–355 has biased composition (basic and acidic residues); the sequence is WSKKNELFSNL.

As to quaternary structure, homodimer, and heterodimer with NHERF2. Binds the N-termini of EZR, RDX and MSN. Binds the C-termini of PDGFRA, PDGFRB, ADRB2 and NOS2. Binds ARHGAP17, EPI64, RACK1, OPRK1, GNAQ, CTNNB1, PLCB3 and CLCN3. Forms a complex with CFTR and SLC4A7. Forms a complex with SLC4A7 and ATP6V1B1. Binds PDZK1. Binds the C-terminus of PAG1. In resting T-cells, part of a PAG1-NHERF1-MSN complex which is disrupted upon TCR activation. Directly interacts with HTR4. Interacts with MCC. Interacts with TRPC4 (via the PDZ-binding domain). Interacts (via the PDZ 1 domain) with PODXL (via the C-terminal PDZ-binding motif DTHL); interaction is not detected in glomerular epithelium cells. Interacts (via the PDZ 1 domain) with PODXL (via the C-terminal PDZ-binding motif DTHL); the interaction take place early in the secretory pathway and is necessary for its apical membrane sorting. Interacts with SLC34A1. Interacts with CFTR, SLC26A3 and SLC26A6. Interacts (via PDZ domains) with ACE2 (via PDZ-binding motif); the interaction may enhance ACE2 membrane residence. Expressed in spermatogenic cells.

The protein localises to the cytoplasm. The protein resides in the apical cell membrane. It localises to the cell projection. It is found in the filopodium. Its subcellular location is the ruffle. The protein localises to the microvillus. The protein resides in the endomembrane system. In terms of biological role, scaffold protein that connects plasma membrane proteins with members of the ezrin/moesin/radixin family and thereby helps to link them to the actin cytoskeleton and to regulate their surface expression. Necessary for recycling of internalized ADRB2. Was first known to play a role in the regulation of the activity and subcellular location of SLC9A3. Necessary for cAMP-mediated phosphorylation and inhibition of SLC9A3. May enhance Wnt signaling. May participate in HTR4 targeting to microvilli. Involved in the regulation of phosphate reabsorption in the renal proximal tubules. Involved in sperm capacitation. May participate in the regulation of the chloride and bicarbonate homeostasis in spermatozoa. This is Na(+)/H(+) exchange regulatory cofactor NHE-RF1 (Nherf1) from Mus musculus (Mouse).